Here is a 268-residue protein sequence, read N- to C-terminus: 4-hydroxy-tetrahydrodipicolinate reductase (268 aa).

Residues 7 to 12 (GAGGRM) and glutamate 33 each bind NAD(+). An NADP(+)-binding site is contributed by arginine 34. NAD(+)-binding positions include 97 to 99 (GTT) and 121 to 124 (SGNM). Histidine 155 (proton donor/acceptor) is an active-site residue. Position 156 (histidine 156) interacts with (S)-2,3,4,5-tetrahydrodipicolinate. Lysine 159 (proton donor) is an active-site residue. 165–166 (GT) is a (S)-2,3,4,5-tetrahydrodipicolinate binding site.

Belongs to the DapB family.

The protein resides in the cytoplasm. The enzyme catalyses (S)-2,3,4,5-tetrahydrodipicolinate + NAD(+) + H2O = (2S,4S)-4-hydroxy-2,3,4,5-tetrahydrodipicolinate + NADH + H(+). It catalyses the reaction (S)-2,3,4,5-tetrahydrodipicolinate + NADP(+) + H2O = (2S,4S)-4-hydroxy-2,3,4,5-tetrahydrodipicolinate + NADPH + H(+). Its pathway is amino-acid biosynthesis; L-lysine biosynthesis via DAP pathway; (S)-tetrahydrodipicolinate from L-aspartate: step 4/4. Its function is as follows. Catalyzes the conversion of 4-hydroxy-tetrahydrodipicolinate (HTPA) to tetrahydrodipicolinate. The polypeptide is 4-hydroxy-tetrahydrodipicolinate reductase (Brucella melitensis biotype 1 (strain ATCC 23456 / CCUG 17765 / NCTC 10094 / 16M)).